Reading from the N-terminus, the 82-residue chain is MKAMKQRIAKFSPVASFRNLCIAGSVTAATSLPAFAGVIDTSAVESAITDGQGDMKAIGGYIVGALVILAVAGLIYSMLRKA.

Residues 1–28 (MKAMKQRIAKFSPVASFRNLCIAGSVTA) form the signal peptide. Over 29-57 (ATSLPAFAGVIDTSAVESAITDGQGDMKA) the chain is Periplasmic. Residues 58 to 78 (IGGYIVGALVILAVAGLIYSM) traverse the membrane as a helical segment. Over 79–82 (LRKA) the chain is Cytoplasmic.

It belongs to the inovirus capsid protein family. In terms of assembly, homomultimerizes. There are several thousands of this protein in the phage capsid.

Its subcellular location is the virion. It is found in the host membrane. Self assembles to form a helical capsid wrapping up the viral genomic DNA. The capsid displays a filamentous structure with a length of 760-1950 nm and a width of 6-8 nm. The virion assembly and budding take place at the host inner membrane. The polypeptide is Capsid protein G8P (VIII) (Pseudomonas phage Pf1 (Bacteriophage Pf1)).